The chain runs to 264 residues: tRNA-uridine aminocarboxypropyltransferase A (264 aa).

Positions 25, 28, 35, and 37 each coordinate Zn(2+). The short motif at 144-147 is the DXTW element; it reads DATW. A disordered region spans residues 245–264; the sequence is RPKLLKKRFQNQQPLEQEEE. A compositionally biased stretch (polar residues) spans 254-264; the sequence is QNQQPLEQEEE.

This sequence belongs to the TDD superfamily. DTWD2 family.

It carries out the reaction a uridine in tRNA + S-adenosyl-L-methionine = a 3-[(3S)-3-amino-3-carboxypropyl]uridine in tRNA + S-methyl-5'-thioadenosine + H(+). Functionally, catalyzes the formation of 3-(3-amino-3-carboxypropyl)uridine (acp3U) at position 20a in the D-loop of several cytoplasmic tRNAs (acp3U(20a)). This Arabidopsis thaliana (Mouse-ear cress) protein is tRNA-uridine aminocarboxypropyltransferase A.